A 235-amino-acid polypeptide reads, in one-letter code: Large ribosomal subunit protein uL1 (235 aa).

It belongs to the universal ribosomal protein uL1 family. As to quaternary structure, part of the 50S ribosomal subunit.

Binds directly to 23S rRNA. The L1 stalk is quite mobile in the ribosome, and is involved in E site tRNA release. Its function is as follows. Protein L1 is also a translational repressor protein, it controls the translation of the L11 operon by binding to its mRNA. The sequence is that of Large ribosomal subunit protein uL1 from Blochmanniella floridana.